The primary structure comprises 432 residues: Trigger factor (432 aa).

The PPIase FKBP-type domain occupies 161–246 (EDRVTIDFTG…LKKVEERELP (86 aa)).

It belongs to the FKBP-type PPIase family. Tig subfamily.

The protein localises to the cytoplasm. It catalyses the reaction [protein]-peptidylproline (omega=180) = [protein]-peptidylproline (omega=0). Its function is as follows. Involved in protein export. Acts as a chaperone by maintaining the newly synthesized protein in an open conformation. Functions as a peptidyl-prolyl cis-trans isomerase. This Klebsiella pneumoniae subsp. pneumoniae (strain ATCC 700721 / MGH 78578) protein is Trigger factor.